Consider the following 461-residue polypeptide: Cyclic AMP-responsive element-binding protein 3-like protein 3 (461 aa).

The Cytoplasmic portion of the chain corresponds to 1 to 322 (MNTDLAAGKM…STSKSAQTGT (322 aa)). The interval 51–120 (DQQVLPNPDS…AGCHPAQPGK (70 aa)) is disordered. Positions 63–85 (FLSSILGSGDSLPSSPLWSPEGS) are enriched in low complexity. The residue at position 173 (Ser-173) is a Phosphoserine. The region spanning 243–306 (VLKKIRRKIR…LSLLEQLKKL (64 aa)) is the bZIP domain. The interval 245 to 274 (KKIRRKIRNKQSAQESRKKKKEYIDGLETR) is basic motif. The interval 285-306 (LQRKVLHLEKQNLSLLEQLKKL) is leucine-zipper. Lys-294 is covalently cross-linked (Glycyl lysine isopeptide (Lys-Gly) (interchain with G-Cter in ubiquitin)). A helical; Signal-anchor for type II membrane protein membrane pass occupies residues 323–343 (CVAVLLLSFALIILPSISPFG). The Lumenal portion of the chain corresponds to 344 to 461 (PNKTESPGDF…AGLEAAGDEL (118 aa)). A disordered region spans residues 370–408 (RVAADAVPGSEAPGPRPEADTTREESPGSPGADWGFQDT). O-linked (GalNAc...) serine glycosylation occurs at Ser-379. The segment covering 386-395 (PEADTTREES) has biased composition (basic and acidic residues). Asn-410, Asn-413, Asn-420, and Asn-427 each carry an N-linked (GlcNAc...) asparagine glycan. Residues 442 to 461 (APGPSTGSGRAGLEAAGDEL) form a disordered region.

Belongs to the bZIP family. ATF subfamily. As to quaternary structure, binds DNA as a dimer. May form homodimers. Interacts with ATF6. Interacts with SYNV1/HRD1; this interaction leads to CREB3L3 ubiquitination and proteasomal degradation. Post-translationally, controlled by regulated intramembrane proteolysis (RIP). Following ER stress a fragment containing the cytoplasmic transcription factor domain is released by proteolysis. The cleavage seems to be performed sequentially by site-1 and site-2 proteases (PS1 and PS2). In terms of processing, N- and O-glycosylated. N-glycosylation is required for optimal proteolytic activation. O-glycosylated with core 1 or possibly core 8 glycans. Ubiquitinated at Lys-294 by SYNV1/HRD1 via 'Lys-27'-linked ubiquitin. Exclusively expressed in liver. Underexpressed in hepatocellular carcinoma tissues.

The protein resides in the endoplasmic reticulum membrane. It localises to the nucleus. Transcription factor that may act during endoplasmic reticulum stress by activating unfolded protein response target genes. Activated in response to cAMP stimulation. In vitro, binds to the cAMP response element (CRE) and box-B element. Activates transcription through box-B element. Activates transcription through CRE. May function synergistically with ATF6. In acute inflammatory response, may activate expression of acute phase response (APR) genes. May be involved in growth suppression. Regulates FGF21 transcription. Plays a crucial role in the regulation of triglyceride metabolism and is required for the maintenance of normal plasma triglyceride concentrations. The sequence is that of Cyclic AMP-responsive element-binding protein 3-like protein 3 (CREB3L3) from Homo sapiens (Human).